A 316-amino-acid polypeptide reads, in one-letter code: Phosphate acyltransferase (316 aa).

It belongs to the PlsX family. Homodimer. Probably interacts with PlsY.

Its subcellular location is the cytoplasm. The enzyme catalyses a fatty acyl-[ACP] + phosphate = an acyl phosphate + holo-[ACP]. It participates in lipid metabolism; phospholipid metabolism. Its function is as follows. Catalyzes the reversible formation of acyl-phosphate (acyl-PO(4)) from acyl-[acyl-carrier-protein] (acyl-ACP). This enzyme utilizes acyl-ACP as fatty acyl donor, but not acyl-CoA. The chain is Phosphate acyltransferase from Chlamydia felis (strain Fe/C-56) (Chlamydophila felis).